We begin with the raw amino-acid sequence, 436 residues long: Ribosomal protein uS12 methylthiotransferase RimO (436 aa).

The MTTase N-terminal domain occupies 2-117 (KNVGIISLGC…IAEVIEKIEK (116 aa)). C11, C47, C80, C154, C158, and C161 together coordinate [4Fe-4S] cluster. Positions 140–369 (TTPNYYAYLK…MEIQKEISYQ (230 aa)) constitute a Radical SAM core domain. In terms of domain architecture, TRAM spans 372–436 (LSKVGKQLEV…AYEYDLVGEY (65 aa)).

The protein belongs to the methylthiotransferase family. RimO subfamily. Requires [4Fe-4S] cluster as cofactor.

The protein localises to the cytoplasm. It catalyses the reaction L-aspartate(89)-[ribosomal protein uS12]-hydrogen + (sulfur carrier)-SH + AH2 + 2 S-adenosyl-L-methionine = 3-methylsulfanyl-L-aspartate(89)-[ribosomal protein uS12]-hydrogen + (sulfur carrier)-H + 5'-deoxyadenosine + L-methionine + A + S-adenosyl-L-homocysteine + 2 H(+). Its function is as follows. Catalyzes the methylthiolation of an aspartic acid residue of ribosomal protein uS12. The protein is Ribosomal protein uS12 methylthiotransferase RimO of Thermoanaerobacter sp. (strain X514).